The sequence spans 309 residues: Branched-chain-amino-acid aminotransferase (309 aa).

Lys-160 is modified (N6-(pyridoxal phosphate)lysine).

This sequence belongs to the class-IV pyridoxal-phosphate-dependent aminotransferase family. Homohexamer. Requires pyridoxal 5'-phosphate as cofactor.

It carries out the reaction L-leucine + 2-oxoglutarate = 4-methyl-2-oxopentanoate + L-glutamate. The catalysed reaction is L-isoleucine + 2-oxoglutarate = (S)-3-methyl-2-oxopentanoate + L-glutamate. It catalyses the reaction L-valine + 2-oxoglutarate = 3-methyl-2-oxobutanoate + L-glutamate. The protein operates within amino-acid biosynthesis; L-isoleucine biosynthesis; L-isoleucine from 2-oxobutanoate: step 4/4. Its pathway is amino-acid biosynthesis; L-leucine biosynthesis; L-leucine from 3-methyl-2-oxobutanoate: step 4/4. It functions in the pathway amino-acid biosynthesis; L-valine biosynthesis; L-valine from pyruvate: step 4/4. Its function is as follows. Acts on leucine, isoleucine and valine. This chain is Branched-chain-amino-acid aminotransferase (ilvE), found in Salmonella typhi.